Reading from the N-terminus, the 126-residue chain is MKKTMLTGKLHQARVTHAELNYEGSCAIDQDLLEQAGILEYEQIEIYNIENGARFSTYAITGERGSKMISVNGAAARLAAVGDRVIICTYASLNAAEIVNHKPSLVYLDAQNNIVRTSKDVPVQVA.

Catalysis depends on serine 25, which acts as the Schiff-base intermediate with substrate; via pyruvic acid. Serine 25 carries the post-translational modification Pyruvic acid (Ser). Threonine 57 contributes to the substrate binding site. The active-site Proton donor is tyrosine 58. 73 to 75 (GAA) contributes to the substrate binding site.

This sequence belongs to the PanD family. As to quaternary structure, heterooctamer of four alpha and four beta subunits. Requires pyruvate as cofactor. Is synthesized initially as an inactive proenzyme, which is activated by self-cleavage at a specific serine bond to produce a beta-subunit with a hydroxyl group at its C-terminus and an alpha-subunit with a pyruvoyl group at its N-terminus.

It is found in the cytoplasm. It catalyses the reaction L-aspartate + H(+) = beta-alanine + CO2. The protein operates within cofactor biosynthesis; (R)-pantothenate biosynthesis; beta-alanine from L-aspartate: step 1/1. Functionally, catalyzes the pyruvoyl-dependent decarboxylation of aspartate to produce beta-alanine. This Psychromonas ingrahamii (strain DSM 17664 / CCUG 51855 / 37) protein is Aspartate 1-decarboxylase.